The primary structure comprises 430 residues: Adenylosuccinate synthetase (430 aa).

GTP-binding positions include 13–19 (GDEGKGK) and 41–43 (GHT). Asp14 serves as the catalytic Proton acceptor. Mg(2+) contacts are provided by Asp14 and Gly41. IMP is bound by residues 14–17 (DEGK), 39–42 (NAGH), Thr130, Arg144, Gln225, Thr240, and Arg304. His42 functions as the Proton donor in the catalytic mechanism. 300–306 (ASTGRPR) contacts substrate. GTP is bound by residues Arg306, 332–334 (KLD), and 414–416 (STG).

The protein belongs to the adenylosuccinate synthetase family. As to quaternary structure, homodimer. The cofactor is Mg(2+).

It is found in the cytoplasm. The catalysed reaction is IMP + L-aspartate + GTP = N(6)-(1,2-dicarboxyethyl)-AMP + GDP + phosphate + 2 H(+). It functions in the pathway purine metabolism; AMP biosynthesis via de novo pathway; AMP from IMP: step 1/2. Plays an important role in the de novo pathway of purine nucleotide biosynthesis. Catalyzes the first committed step in the biosynthesis of AMP from IMP. The polypeptide is Adenylosuccinate synthetase (Xanthomonas campestris pv. campestris (strain 8004)).